Reading from the N-terminus, the 248-residue chain is MSDGKEELVNRAKLAEQAERYDDMAASMKKVTELGAELSNEERNLLSVAYKNVVGARRSSWRVISSIEQKTEGSEKKQQMAKEYREKVEKELRDICQDVLNLLDKFLIPKAGAAESKVFYLKMKGDYYRYLAEVASGDDRNSVVEKSQQSYQEAFDIAKDKMQPTHPIRLGLALNFSVFFYEILNAPDKACQLAKQAFDDAIAELDTLNEDSYKDSTLIMQLLRDNLTLWTSDAATDDTDANETEGGN.

It belongs to the 14-3-3 family. Interacts with daf-16. Interacts with sir-2.1. Interacts with hcf-1.

The protein resides in the cytoplasm. The protein localises to the nucleus. Its function is as follows. Required for extension of lifespan by sir-2.1. Required to modulate lifespan, in concert with hcf-1, acting redundantly with 14-3-3-like protein par-5. Promotes nuclear export of yap-1. Negatively regulates the transcriptional activity of daf-16 by sequestering it to the cytoplasm. This Caenorhabditis elegans protein is 14-3-3-like protein 2.